A 662-amino-acid chain; its full sequence is UPF0313 protein CPF_1407 (662 aa).

In terms of domain architecture, Radical SAM core spans 296–567 (AIEEVKFSIV…AMQRALLQFK (272 aa)). [4Fe-4S] cluster contacts are provided by cysteine 310, cysteine 314, and cysteine 317. The disordered stretch occupies residues 596–662 (IRDKNSFGKG…QRSSKGKKRR (67 aa)). Basic and acidic residues predominate over residues 618–632 (SRNENSGRRESEDKK). Residues 633–644 (RSSHSKKQRGNK) are compositionally biased toward basic residues.

Belongs to the UPF0313 family. It depends on [4Fe-4S] cluster as a cofactor.

The polypeptide is UPF0313 protein CPF_1407 (Clostridium perfringens (strain ATCC 13124 / DSM 756 / JCM 1290 / NCIMB 6125 / NCTC 8237 / Type A)).